We begin with the raw amino-acid sequence, 144 residues long: Large ribosomal subunit protein uL15 (144 aa).

Residues 1–53 are disordered; that stretch reads MRLNTLSPADGSKHAPKRLGRGIGSGLGKTGGRGHKGQNSRSGGGVRRGFEGG. Positions 21–31 are enriched in gly residues; the sequence is RGIGSGLGKTG.

Belongs to the universal ribosomal protein uL15 family. Part of the 50S ribosomal subunit.

Binds to the 23S rRNA. This Erwinia tasmaniensis (strain DSM 17950 / CFBP 7177 / CIP 109463 / NCPPB 4357 / Et1/99) protein is Large ribosomal subunit protein uL15.